The primary structure comprises 262 residues: Thiazole synthase (262 aa).

The active-site Schiff-base intermediate with DXP is the K97. 1-deoxy-D-xylulose 5-phosphate-binding positions include G158, 185 to 186 (AG), and 207 to 208 (NT). Positions 243-262 (DKAQASTPTVGQPFWHSAEY) are disordered.

Belongs to the ThiG family. As to quaternary structure, homotetramer. Forms heterodimers with either ThiH or ThiS.

It is found in the cytoplasm. It carries out the reaction [ThiS sulfur-carrier protein]-C-terminal-Gly-aminoethanethioate + 2-iminoacetate + 1-deoxy-D-xylulose 5-phosphate = [ThiS sulfur-carrier protein]-C-terminal Gly-Gly + 2-[(2R,5Z)-2-carboxy-4-methylthiazol-5(2H)-ylidene]ethyl phosphate + 2 H2O + H(+). The protein operates within cofactor biosynthesis; thiamine diphosphate biosynthesis. Catalyzes the rearrangement of 1-deoxy-D-xylulose 5-phosphate (DXP) to produce the thiazole phosphate moiety of thiamine. Sulfur is provided by the thiocarboxylate moiety of the carrier protein ThiS. In vitro, sulfur can be provided by H(2)S. This Neisseria meningitidis serogroup B (strain ATCC BAA-335 / MC58) protein is Thiazole synthase.